Reading from the N-terminus, the 629-residue chain is Embryonic polyadenylate-binding protein B (629 aa).

RRM domains lie at Ala11–Arg89, Gly99–Ser175, Thr191–Lys268, and Val294–Arg370. The PABC domain occupies Gln539–Ala616.

This sequence belongs to the polyadenylate-binding protein type-1 family. As to quaternary structure, interacts with dazl in an RNA-independent manner. The C-terminus can self-associate and also interact with the C-terminus of pabpc1, independently of RNA. RRM 1 and RRM 2 interact with both eif4g1 and paip1, and the C-terminus also interacts with paip1. Prior to oocyte maturation, found in a complex with dazl and pum2 proteins and spdy1 mRNA; pum2 dissociates from the complex during maturation. Interacts with the translation termination factor sup35/erf3.

It localises to the cytoplasm. Its function is as follows. Binds and protects the poly(A) tail of mRNA with or without an AU-rich element (ARE) and prevents mRNA deadenylation. Stimulates the translation of mRNAs to which it is bound during early development. This chain is Embryonic polyadenylate-binding protein B (epabp-b), found in Xenopus laevis (African clawed frog).